We begin with the raw amino-acid sequence, 430 residues long: Pre-mRNA-processing protein 45 (430 aa).

Polar residues predominate over residues 1-26 (MSFRTLSSLLPSPQNSEVSESSAFSR). Disordered stretches follow at residues 1 to 28 (MSFRTLSSLLPSPQNSEVSESSAFSRQS), 280 to 299 (MERNQRRRAERELERSNKMS), and 370 to 430 (PTTG…PHTS).

Belongs to the SNW family. In terms of assembly, associated with the spliceosome.

It is found in the nucleus. In terms of biological role, involved in pre-mRNA splicing. The chain is Pre-mRNA-processing protein 45 (PRP45) from Kluyveromyces lactis (strain ATCC 8585 / CBS 2359 / DSM 70799 / NBRC 1267 / NRRL Y-1140 / WM37) (Yeast).